We begin with the raw amino-acid sequence, 476 residues long: Cysteine--tRNA ligase (476 aa).

Cysteine 28 serves as a coordination point for Zn(2+). Positions 30–40 match the 'HIGH' region motif; that stretch reads PTVYDHTHLGH. Cysteine 208, histidine 233, and glutamate 237 together coordinate Zn(2+). The 'KMSKS' region motif lies at 265-269; the sequence is KMSKS. Lysine 268 serves as a coordination point for ATP.

The protein belongs to the class-I aminoacyl-tRNA synthetase family. Zn(2+) serves as cofactor.

It is found in the cytoplasm. It carries out the reaction tRNA(Cys) + L-cysteine + ATP = L-cysteinyl-tRNA(Cys) + AMP + diphosphate. This chain is Cysteine--tRNA ligase, found in Methanococcus maripaludis (strain C7 / ATCC BAA-1331).